The sequence spans 441 residues: tRNA(Ile)-lysidine synthase (441 aa).

ATP is bound at residue serine 28–serine 33.

This sequence belongs to the tRNA(Ile)-lysidine synthase family.

The protein localises to the cytoplasm. The catalysed reaction is cytidine(34) in tRNA(Ile2) + L-lysine + ATP = lysidine(34) in tRNA(Ile2) + AMP + diphosphate + H(+). Ligates lysine onto the cytidine present at position 34 of the AUA codon-specific tRNA(Ile) that contains the anticodon CAU, in an ATP-dependent manner. Cytidine is converted to lysidine, thus changing the amino acid specificity of the tRNA from methionine to isoleucine. The chain is tRNA(Ile)-lysidine synthase from Orientia tsutsugamushi (strain Boryong) (Rickettsia tsutsugamushi).